The primary structure comprises 239 residues: Immunoglobulin superfamily member 23 (239 aa).

Residues 63–93 (ELEAQPPTSSSPKGLPGRPRTSQEVPNAEDN) are disordered. Positions 94–179 (PSLIPLVTFP…ELVSEPVTVS (86 aa)) constitute an Ig-like domain. The helical transmembrane segment at 214–234 (LIVAATIGGLVLIGSVCFYIL) threads the bilayer.

The protein resides in the cell membrane. May be involved in osteoclast differentiation. The chain is Immunoglobulin superfamily member 23 from Mus musculus (Mouse).